We begin with the raw amino-acid sequence, 1468 residues long: DNA polymerase alpha catalytic subunit A (1468 aa).

Over residues 1–12 the composition is skewed to basic and acidic residues; that stretch reads MSSKSEKLEKLR. Disordered stretches follow at residues 1 to 34, 71 to 135, and 166 to 205; these read MSSK…SDGD, GVEE…KKSI, and NLNS…PDSS. An N-acetylserine modification is found at Ser2. A Phosphoserine modification is found at Ser31. Residues 71–80 are compositionally biased toward basic and acidic residues; it reads GVEEDWREVD. 5 positions are modified to phosphoserine: Ser82, Ser83, Ser84, Ser169, and Ser170. Over residues 166–176 the composition is skewed to polar residues; it reads NLNSSPTSEFK. Thr172 bears the Phosphothreonine mark. The segment covering 183 to 205 has biased composition (basic and acidic residues); that stretch reads NGNDESSHDAGISKKVKIDPDSS. Residues Ser240 and Ser274 each carry the phosphoserine modification. Positions 256–275 are disordered; that stretch reads LANPPSAQSLADEEDDEDSD. A compositionally biased stretch (acidic residues) spans 266–275; the sequence is ADEEDDEDSD. Thr309 and Thr313 each carry phosphothreonine. The disordered stretch occupies residues 813 to 837; it reads PDKEGNRSRAQKQRQNEENADAPVN. A DNA-binding region spans residues 1246-1381; it reads KKYFRREGGN…CTGVMRYKYS (136 aa). 8 residues coordinate Zn(2+): Cys1287, Cys1290, Cys1314, Cys1317, Cys1348, Cys1353, Cys1367, and Cys1372. A CysA-type zinc finger spans residues 1287-1317; sequence CPSCDKRFPFGGIVSSNYYRVSYNGLQCKHC. The CysB motif motif lies at 1348-1372; that stretch reads CDDSTCGIVTRQVSVFGKRCLNDGC.

It belongs to the DNA polymerase type-B family. DNA polymerase alpha:primase is a four subunit enzyme complex, which is assembled throughout the cell cycle, and consists of the two DNA polymerase subunits A POL1 and B POL12, and the DNA primase large PRI2 and small PRI1 subunits. Subunit B POL12 binds to subunit A POL1. POL1 interacts with CDC13, POB3, SPT16 and MCM10.

The protein resides in the nucleus. The catalysed reaction is DNA(n) + a 2'-deoxyribonucleoside 5'-triphosphate = DNA(n+1) + diphosphate. Its function is as follows. Catalytic component of DNA polymerase alpha, which in complex with DNA primase (DNA polymerase alpha:primase) constitutes a replicative polymerase. POL1 has a role in promoting telomere replication during interaction with CDC13. The chain is DNA polymerase alpha catalytic subunit A (POL1) from Saccharomyces cerevisiae (strain ATCC 204508 / S288c) (Baker's yeast).